A 316-amino-acid polypeptide reads, in one-letter code: MYNYLDFEKPVQDLELKILELKKLAENGEAVDVADEITRLEKRSRDALRDLYKALTPWQKVQVARHSDRPHCVDYIKGLFSDFTPLAGDRNFGEDQAIVGGFARFRGEPVAIIGQEKGSDTTSRLRHNFGSVRPEGYRKAVRLMELADRFKIPLLTLVDTAGAYPGVGAEERGQAEAIARSTSACLALKVPSISVVIGEGGSGGAIAIATANRVYMLEHAIYSVISPEGAASILWRDTTRSKDAATNMKITAQDLLELKIIDAIIPEPMGGAQRAPEKVIAATGDLIAKTMKEFAGANTDFREQRREKYLAMGRSL.

A CoA carboxyltransferase C-terminal domain is found at 40-293 (LEKRSRDALR…GDLIAKTMKE (254 aa)).

This sequence belongs to the AccA family. Acetyl-CoA carboxylase is a heterohexamer composed of biotin carboxyl carrier protein (AccB), biotin carboxylase (AccC) and two subunits each of ACCase subunit alpha (AccA) and ACCase subunit beta (AccD).

The protein localises to the cytoplasm. It catalyses the reaction N(6)-carboxybiotinyl-L-lysyl-[protein] + acetyl-CoA = N(6)-biotinyl-L-lysyl-[protein] + malonyl-CoA. It functions in the pathway lipid metabolism; malonyl-CoA biosynthesis; malonyl-CoA from acetyl-CoA: step 1/1. Component of the acetyl coenzyme A carboxylase (ACC) complex. First, biotin carboxylase catalyzes the carboxylation of biotin on its carrier protein (BCCP) and then the CO(2) group is transferred by the carboxyltransferase to acetyl-CoA to form malonyl-CoA. This Mesorhizobium japonicum (strain LMG 29417 / CECT 9101 / MAFF 303099) (Mesorhizobium loti (strain MAFF 303099)) protein is Acetyl-coenzyme A carboxylase carboxyl transferase subunit alpha.